We begin with the raw amino-acid sequence, 61 residues long: MEKLKSIKITLVKSLIGAKKRHRLIIQGMGLRKINRTVFLPDLPSTRGMINKTAYLLKVEE.

The protein belongs to the universal ribosomal protein uL30 family. In terms of assembly, part of the 50S ribosomal subunit.

This chain is Large ribosomal subunit protein uL30, found in Nitrosomonas eutropha (strain DSM 101675 / C91 / Nm57).